Reading from the N-terminus, the 497-residue chain is Proline--tRNA ligase (497 aa).

This sequence belongs to the class-II aminoacyl-tRNA synthetase family. ProS type 3 subfamily. As to quaternary structure, homodimer.

Its subcellular location is the cytoplasm. The enzyme catalyses tRNA(Pro) + L-proline + ATP = L-prolyl-tRNA(Pro) + AMP + diphosphate. Functionally, catalyzes the attachment of proline to tRNA(Pro) in a two-step reaction: proline is first activated by ATP to form Pro-AMP and then transferred to the acceptor end of tRNA(Pro). This chain is Proline--tRNA ligase, found in Deinococcus geothermalis (strain DSM 11300 / CIP 105573 / AG-3a).